A 115-amino-acid polypeptide reads, in one-letter code: MPNIEIAQADEVIITTLEELGPAEPTTDQIMRFDAAMSEDTQGLGHSLLKEVSDIQKSFKTVKSDLHTKLAVSVDNPNDLMLMQWSLIRITIQEELIAKTAGRMSQNVETLSKGG.

This sequence belongs to the YscI/HrpB family.

Belongs to an operon involved in the translocation of Yop proteins across the bacterial membranes or in the specific control of this function. The sequence is that of Yop proteins translocation protein I (yscI) from Yersinia pestis.